Reading from the N-terminus, the 551-residue chain is Chaperonin GroEL (551 aa).

Residues 30-33, Lys-51, 87-91, Gly-415, 481-483, and Asp-497 each bind ATP; these read TLGP, DGTTT, and NAA.

It belongs to the chaperonin (HSP60) family. In terms of assembly, forms a cylinder of 14 subunits composed of two heptameric rings stacked back-to-back. Interacts with the co-chaperonin GroES.

The protein resides in the cytoplasm. It catalyses the reaction ATP + H2O + a folded polypeptide = ADP + phosphate + an unfolded polypeptide.. Together with its co-chaperonin GroES, plays an essential role in assisting protein folding. The GroEL-GroES system forms a nano-cage that allows encapsulation of the non-native substrate proteins and provides a physical environment optimized to promote and accelerate protein folding. The protein is Chaperonin GroEL of Magnetococcus marinus (strain ATCC BAA-1437 / JCM 17883 / MC-1).